A 263-amino-acid polypeptide reads, in one-letter code: Acyl-[acyl-carrier-protein]--UDP-N-acetylglucosamine O-acyltransferase (263 aa).

The protein belongs to the transferase hexapeptide repeat family. LpxA subfamily. Homotrimer.

The protein resides in the cytoplasm. It carries out the reaction a (3R)-hydroxyacyl-[ACP] + UDP-N-acetyl-alpha-D-glucosamine = a UDP-3-O-[(3R)-3-hydroxyacyl]-N-acetyl-alpha-D-glucosamine + holo-[ACP]. The protein operates within glycolipid biosynthesis; lipid IV(A) biosynthesis; lipid IV(A) from (3R)-3-hydroxytetradecanoyl-[acyl-carrier-protein] and UDP-N-acetyl-alpha-D-glucosamine: step 1/6. Its function is as follows. Involved in the biosynthesis of lipid A, a phosphorylated glycolipid that anchors the lipopolysaccharide to the outer membrane of the cell. The protein is Acyl-[acyl-carrier-protein]--UDP-N-acetylglucosamine O-acyltransferase of Campylobacter jejuni subsp. jejuni serotype O:6 (strain 81116 / NCTC 11828).